The sequence spans 44 residues: Thioredoxin (44 aa).

Residues 2-44 enclose the Thioredoxin domain; that stretch reads IELDKSNFEEEVLKAEGTVLVDFWSPSCEPCKALMPHVHDFEE. An intrachain disulfide couples cysteine 29 to cysteine 32.

Belongs to the thioredoxin family.

In terms of biological role, participates in various redox reactions through the reversible oxidation of its active center dithiol to a disulfide and catalyzes dithiol-disulfide exchange reactions. This chain is Thioredoxin (trxA), found in Tissierella creatinophila.